Consider the following 318-residue polypeptide: Formimidoylglutamase (318 aa).

His130, Asp155, His157, Asp159, Asp246, and Asp248 together coordinate Mn(2+).

Belongs to the arginase family. It depends on Mn(2+) as a cofactor.

It catalyses the reaction N-formimidoyl-L-glutamate + H2O = formamide + L-glutamate. Its pathway is amino-acid degradation; L-histidine degradation into L-glutamate; L-glutamate from N-formimidoyl-L-glutamate (hydrolase route): step 1/1. Its function is as follows. Catalyzes the conversion of N-formimidoyl-L-glutamate to L-glutamate and formamide. The polypeptide is Formimidoylglutamase (Klebsiella pneumoniae subsp. pneumoniae (strain ATCC 700721 / MGH 78578)).